We begin with the raw amino-acid sequence, 198 residues long: Cell division protein SepF (198 aa).

The segment at 170 to 198 (EVPQPPARPARPASTNPPAWGNETNRMAQ) is disordered. The segment covering 179–188 (ARPASTNPPA) has biased composition (low complexity).

The protein belongs to the SepF family. Homodimer. Interacts with FtsZ.

The protein resides in the cytoplasm. Cell division protein that is part of the divisome complex and is recruited early to the Z-ring. Probably stimulates Z-ring formation, perhaps through the cross-linking of FtsZ protofilaments. Its function overlaps with FtsA. The sequence is that of Cell division protein SepF from Trichormus variabilis (strain ATCC 29413 / PCC 7937) (Anabaena variabilis).